Consider the following 839-residue polypeptide: Transcription regulator protein BACH2 (839 aa).

The BTB domain occupies 37–103; that stretch reads CDVTLIVERK…AYTAKLLLSR (67 aa). Disordered stretches follow at residues 150 to 170 and 247 to 331; these read QRPQ…EETM and HGTS…LDRS. Residues 161 to 170 show a composition bias toward acidic residues; sequence GEEEEEEETM. Positions 247-263 are enriched in polar residues; that stretch reads HGTSGFASTFSEDSPGN. Residues 297–312 show a composition bias toward basic and acidic residues; it reads TDIKDRPGDVEMDRKQ. Phosphoserine is present on serine 314. Positions 321 to 331 are enriched in low complexity; the sequence is TPTGAACLDRS. Glycyl lysine isopeptide (Lys-Gly) (interchain with G-Cter in SUMO2) cross-links involve residues lysine 381 and lysine 420. Serine 520 is subject to Phosphoserine. The tract at residues 582–609 is disordered; it reads QSYGTNSSDESGSFSEADSESCPVQDRG. Polar residues predominate over residues 583-597; the sequence is SYGTNSSDESGSFSE. The bZIP domain occupies 645–708; sequence FIHDIRRRSK…GELLDNFSCL (64 aa). The basic motif stretch occupies residues 650–666; sequence RRRSKNRIAAQRCRKRK. The leucine-zipper stretch occupies residues 670–677; the sequence is IQNLECEI. Residues 778–813 form a disordered region; that stretch reads PWVPSNTSENCTSGRRLEGSDPGTFSERGPPLEARS. Positions 781–790 are enriched in polar residues; sequence PSNTSENCTS. The Nuclear export signal signature appears at 819–839; it reads DFCQEMTEKCTTDEQPRKDYA.

The protein belongs to the bZIP family. CNC subfamily. As to quaternary structure, homodimer; disulfide-linked. Heterodimer of BACH2 and Maf-related transcription factors. The reversible disulfide bond may provide a mechanism to regulate the activity in oxidative stress responses. Post-translationally, phosphorylation at Ser-520 downstream of the PI-3K pathway promotes nuclear export. In terms of tissue distribution, detected in brain and spleen.

Its subcellular location is the cytoplasm. The protein localises to the nucleus. In terms of biological role, transcriptional regulator that acts as a repressor or activator. Binds to Maf recognition elements (MARE). Plays an important role in coordinating transcription activation and repression by MAFK. Induces apoptosis in response to oxidative stress through repression of the antiapoptotic factor HMOX1. Positively regulates the nuclear import of actin. Is a key regulator of adaptive immunity, crucial for the maintenance of regulatory T-cell function and B-cell maturation. This Mus musculus (Mouse) protein is Transcription regulator protein BACH2 (Bach2).